Reading from the N-terminus, the 439-residue chain is Telomeric repeat-binding factor 1 (439 aa).

A disordered region spans residues 1–36 (MAEDVSSAAPSPRGCADGRDADPTEEQMAETERNDE). At alanine 2 the chain carries N-acetylalanine. Serine 11 bears the Phosphoserine mark. The segment covering 23 to 36 (PTEEQMAETERNDE) has biased composition (acidic residues). Residues 58–268 (EEEEEDAGLV…AAAKVVESKR (211 aa)) are TRFH mediates dimerization. Residue lysine 213 forms a Glycyl lysine isopeptide (Lys-Gly) (interchain with G-Cter in SUMO2) linkage. Serine 219 is modified (phosphoserine; by ATM). Residues 265–378 (ESKRTRTITS…PVTPEKHRAR (114 aa)) form an interaction with RLIM region. The segment at 266–311 (SKRTRTITSQDKPSGNDVEMETEANLDTRKSVSDKQSAVTESSEGT) is disordered. Residues 299–311 (DKQSAVTESSEGT) show a composition bias toward polar residues. A Glycyl lysine isopeptide (Lys-Gly) (interchain with G-Cter in SUMO2) cross-link involves residue lysine 325. A disordered region spans residues 326–375 (LQHGTQQQDLNKKERRVGTPQSTKKKKESRRATESRIPVSKSQPVTPEKH). The short motif at 337 to 356 (KKERRVGTPQSTKKKKESRR) is the Nuclear localization signal element. Lysine 366 is covalently cross-linked (Glycyl lysine isopeptide (Lys-Gly) (interchain with G-Cter in SUMO2)). In terms of domain architecture, HTH myb-type spans 375-432 (HRARKRQAWLWEEDKNLRSGVRKYGEGNWSKILLHYKFNNRTSVMLKDRWRTMKKLKL). The segment at residues 403–428 (WSKILLHYKFNNRTSVMLKDRWRTMK) is a DNA-binding region (H-T-H motif).

As to quaternary structure, homodimer; can contain both isoforms. Found in a complex with POT1; TINF2 and TNKS1. Interacts with ATM, TINF2, TNKS1, TNKS2, PINX1, NEK2 and MAPRE1. Component of the shelterin complex (telosome) composed of TERF1, TERF2, TINF2, TERF2IP ACD and POT1. Interacts with RLIM (via N-terminus). Interacts with FBXO4. Interaction with TINF2 protects against interaction with FBXO4 and subsequent polyubiquitination and proteasomal degradation. Interacts with GNL3L; this interaction promotes homodimerization. Interacts with TIN2. Interacts with RTEL1. Interactions with GNL3L and TIN2 are mutually exclusive. Interacts with CCDC79/TERB1. Interacts with TRIOBP isoform 1; mediates TERF1 localization to the centrosome. In terms of processing, phosphorylated preferentially on Ser-219 in an ATM-dependent manner in response to ionizing DNA damage. Post-translationally, ADP-ribosylation by TNKS1 or TNKS2 diminishes its ability to bind to telomeric DNA. Ubiquitinated by RLIM/RNF12, leading to its degradation by the proteasome. Ubiquitinated by a SCF (SKP1-CUL1-F-box protein) ubiquitin-protein ligase complex, leading to its degradation by the proteasome. Highly expressed and ubiquitous. Isoform Pin2 predominates.

The protein resides in the nucleus. It localises to the cytoplasm. The protein localises to the cytoskeleton. Its subcellular location is the spindle. It is found in the chromosome. The protein resides in the telomere. Functionally, binds the telomeric double-stranded 5'-TTAGGG-3' repeat and negatively regulates telomere length. Involved in the regulation of the mitotic spindle. Component of the shelterin complex (telosome) that is involved in the regulation of telomere length and protection. Shelterin associates with arrays of double-stranded 5'-TTAGGG-3' repeats added by telomerase and protects chromosome ends; without its protective activity, telomeres are no longer hidden from the DNA damage surveillance and chromosome ends are inappropriately processed by DNA repair pathways. The protein is Telomeric repeat-binding factor 1 (TERF1) of Homo sapiens (Human).